Here is a 327-residue protein sequence, read N- to C-terminus: Malate dehydrogenase (327 aa).

11 to 17 provides a ligand contact to NAD(+); that stretch reads GAAGQIS. The substrate site is built by Arg92 and Arg98. Residues Asn105, Gln112, and 129 to 131 each bind NAD(+); that span reads VGN. Asn131 and Arg162 together coordinate substrate. The Proton acceptor role is filled by His187.

Belongs to the LDH/MDH superfamily. MDH type 2 family.

It carries out the reaction (S)-malate + NAD(+) = oxaloacetate + NADH + H(+). Functionally, catalyzes the reversible oxidation of malate to oxaloacetate. The chain is Malate dehydrogenase from Nitrosomonas europaea (strain ATCC 19718 / CIP 103999 / KCTC 2705 / NBRC 14298).